We begin with the raw amino-acid sequence, 872 residues long: Alanine--tRNA ligase (872 aa).

Residues His567, His571, Cys669, and His673 each coordinate Zn(2+).

This sequence belongs to the class-II aminoacyl-tRNA synthetase family. Requires Zn(2+) as cofactor.

The protein localises to the cytoplasm. The catalysed reaction is tRNA(Ala) + L-alanine + ATP = L-alanyl-tRNA(Ala) + AMP + diphosphate. Catalyzes the attachment of alanine to tRNA(Ala) in a two-step reaction: alanine is first activated by ATP to form Ala-AMP and then transferred to the acceptor end of tRNA(Ala). Also edits incorrectly charged Ser-tRNA(Ala) and Gly-tRNA(Ala) via its editing domain. The sequence is that of Alanine--tRNA ligase from Streptococcus sanguinis (strain SK36).